The following is a 242-amino-acid chain: DNA repair protein RecO (242 aa).

Belongs to the RecO family. Monomer.

In terms of biological role, involved in DNA repair and RecF pathway recombination. This chain is DNA repair protein RecO, found in Salmonella schwarzengrund (strain CVM19633).